We begin with the raw amino-acid sequence, 340 residues long: Phosphate acyltransferase (340 aa).

Belongs to the PlsX family. In terms of assembly, homodimer. Probably interacts with PlsY.

The protein resides in the cytoplasm. It carries out the reaction a fatty acyl-[ACP] + phosphate = an acyl phosphate + holo-[ACP]. Its pathway is lipid metabolism; phospholipid metabolism. Its function is as follows. Catalyzes the reversible formation of acyl-phosphate (acyl-PO(4)) from acyl-[acyl-carrier-protein] (acyl-ACP). This enzyme utilizes acyl-ACP as fatty acyl donor, but not acyl-CoA. This Pseudomonas syringae pv. syringae (strain B728a) protein is Phosphate acyltransferase.